The chain runs to 213 residues: Orotate phosphoribosyltransferase (213 aa).

Lysine 26 serves as a coordination point for 5-phospho-alpha-D-ribose 1-diphosphate. 34-35 contributes to the orotate binding site; it reads FF. 5-phospho-alpha-D-ribose 1-diphosphate contacts are provided by residues 72 to 73, arginine 99, lysine 100, lysine 103, histidine 105, and 124 to 132; these read YK and DDVITAGTA. Residues threonine 128 and arginine 156 each contribute to the orotate site.

This sequence belongs to the purine/pyrimidine phosphoribosyltransferase family. PyrE subfamily. In terms of assembly, homodimer. It depends on Mg(2+) as a cofactor.

The enzyme catalyses orotidine 5'-phosphate + diphosphate = orotate + 5-phospho-alpha-D-ribose 1-diphosphate. It functions in the pathway pyrimidine metabolism; UMP biosynthesis via de novo pathway; UMP from orotate: step 1/2. Functionally, catalyzes the transfer of a ribosyl phosphate group from 5-phosphoribose 1-diphosphate to orotate, leading to the formation of orotidine monophosphate (OMP). The chain is Orotate phosphoribosyltransferase from Photorhabdus laumondii subsp. laumondii (strain DSM 15139 / CIP 105565 / TT01) (Photorhabdus luminescens subsp. laumondii).